Reading from the N-terminus, the 437-residue chain is GTPase Obg (437 aa).

The region spanning 2–160 (SMFLDTAKVS…RQLELELKIL (159 aa)) is the Obg domain. An OBG-type G domain is found at 161 to 338 (ADVGLVGFPS…LLEATAELLA (178 aa)). Residues 167–174 (GFPSVGKS), 192–196 (FTTIV), 214–217 (DLPG), 284–287 (NKMD), and 319–321 (SSL) each bind GTP. Mg(2+) contacts are provided by Ser-174 and Thr-194. An OCT domain is found at 359–437 (GFAAEEKAFE…IGKFEFEFVD (79 aa)).

It belongs to the TRAFAC class OBG-HflX-like GTPase superfamily. OBG GTPase family. In terms of assembly, monomer. Mg(2+) is required as a cofactor.

The protein localises to the cytoplasm. In terms of biological role, an essential GTPase which binds GTP, GDP and possibly (p)ppGpp with moderate affinity, with high nucleotide exchange rates and a fairly low GTP hydrolysis rate. Plays a role in control of the cell cycle, stress response, ribosome biogenesis and in those bacteria that undergo differentiation, in morphogenesis control. The sequence is that of GTPase Obg from Streptococcus equi subsp. equi (strain 4047).